We begin with the raw amino-acid sequence, 195 residues long: Imidazoleglycerol-phosphate dehydratase (195 aa).

The protein belongs to the imidazoleglycerol-phosphate dehydratase family.

The protein localises to the cytoplasm. The catalysed reaction is D-erythro-1-(imidazol-4-yl)glycerol 3-phosphate = 3-(imidazol-4-yl)-2-oxopropyl phosphate + H2O. The protein operates within amino-acid biosynthesis; L-histidine biosynthesis; L-histidine from 5-phospho-alpha-D-ribose 1-diphosphate: step 6/9. This is Imidazoleglycerol-phosphate dehydratase from Cupriavidus pinatubonensis (strain JMP 134 / LMG 1197) (Cupriavidus necator (strain JMP 134)).